The sequence spans 1021 residues: Sodium/potassium-transporting ATPase subunit alpha-1 (1021 aa).

Positions 1–5 (MGKGV) are excised as a propeptide. Basic and acidic residues predominate over residues 1–11 (MGKGVGRDKYE). The tract at residues 1–37 (MGKGVGRDKYEPAAVSEHGDKKKAKKERDMDELKKEV) is disordered. Residues 6–85 (GRDKYEPAAV…NALTPPPTTP (80 aa)) are Cytoplasmic-facing. At lysine 9 the chain carries N6-acetyllysine. Residue tyrosine 10 is modified to Phosphotyrosine. Serine 16 carries the post-translational modification Phosphoserine; by PKC. Lysine 21 bears the N6-acetyllysine mark. A compositionally biased stretch (basic and acidic residues) spans 26–37 (KERDMDELKKEV). 2 positions are modified to phosphoserine: serine 38 and serine 45. Residues 80-82 (PPP) form a phosphoinositide-3 kinase binding region. Residues 86 to 106 (EWVKFCRQLFGGFSMLLWIGA) form a helical membrane-spanning segment. Topologically, residues 107 to 129 (ILCFLAYGIQAATEEEPQNDNLY) are extracellular. A helical membrane pass occupies residues 130–150 (LGVVLSAVVIITGCFSYYQEA). Topologically, residues 151 to 286 (KSSKIMESFK…GGQTPIAAEI (136 aa)) are cytoplasmic. The interval 214 to 233 (SSLTGESEPQTRSPDFTNEN) is disordered. Serine 226 carries the phosphoserine modification. Tyrosine 258 carries the phosphotyrosine modification. The helical transmembrane segment at 287 to 306 (EHFIHIITGVAVFLGVSFFI) threads the bilayer. Residues 307–318 (LSLILEYTWLEA) lie on the Extracellular side of the membrane. The chain crosses the membrane as a helical span at residues 319-336 (VIFLIGIIVANVPEGLLA). The Cytoplasmic portion of the chain corresponds to 337 to 770 (TVTVCLTLTA…EEGRLIFDNL (434 aa)). Residue aspartate 374 is the 4-aspartylphosphate intermediate of the active site. 2 positions are modified to phosphoserine: serine 450 and serine 482. Lysine 485 contacts ATP. At tyrosine 540 the chain carries Phosphotyrosine. Residues 594–715 (RAAVPDAVGK…QGAIVAVTGD (122 aa)) form a mediates interaction with SCN7A region. An N6-succinyllysine modification is found at lysine 659. Phosphoserine occurs at positions 666 and 673. The Mg(2+) site is built by aspartate 715 and aspartate 719. The helical transmembrane segment at 771–790 (KKSIAYTLTSNIPEITPFLI) threads the bilayer. Residues 791 to 800 (FIIANIPLPL) are Extracellular-facing. A helical membrane pass occupies residues 801–821 (GTVTILCIDLGTDMVPAISLA). The Cytoplasmic portion of the chain corresponds to 822 to 841 (YEQAESDIMKRQPRNPKTDK). A helical transmembrane segment spans residues 842–864 (LVNEQLISMAYGQIGMIQALGGF). Over 865-916 (FTYFVILAENGFLPIHLLGLRVNWDDRWINDVEDSYGQQWTYEQRKIVEFTC) the chain is Extracellular. A helical transmembrane segment spans residues 917-936 (HTPFFVTIVVVQWADLVICK). At 937-949 (TRRNSVFQQGMKN) the chain is on the cytoplasmic side. Serine 941 carries the post-translational modification Phosphoserine; by PKA. Residues 950 to 968 (KILIFGLFEETALAAFLSY) traverse the membrane as a helical segment. The Extracellular portion of the chain corresponds to 969-983 (CPGMGVALRMYPLKP). The helical transmembrane segment at 984 to 1004 (TWWFCAFPYSLLIFVYDEVRK) threads the bilayer. Residues 1005 to 1021 (LIIRRRPGGWVEKETYY) lie on the Cytoplasmic side of the membrane.

The protein belongs to the cation transport ATPase (P-type) (TC 3.A.3) family. Type IIC subfamily. The sodium/potassium-transporting ATPase is composed of a catalytic alpha subunit, an auxiliary non-catalytic beta subunit and an additional regulatory subunit. Interacts with regulatory subunit FXYD1. Interacts with regulatory subunit FXYD3. Interacts with SIK1. Interacts with SLC35G1 and STIM1. Interacts with CLN3; this interaction regulates the sodium/potassium-transporting ATPase complex localization at the plasma membrane. Interacts with SCN7A; activates ATP1A1 P-type sodium:potassium-exchanging transporter activity which indirectly signals to nearby neurons to regulate sodium homeostasis. Phosphorylation on Tyr-10 modulates pumping activity. Phosphorylation of Ser-941 by PKA modulates the response of ATP1A1 to PKC. Dephosphorylation by protein phosphatase 2A (PP2A) following increases in intracellular sodium, leading to increase catalytic activity.

It is found in the cell membrane. The protein localises to the basolateral cell membrane. Its subcellular location is the sarcolemma. It localises to the cell projection. The protein resides in the axon. It is found in the melanosome. It carries out the reaction K(+)(out) + Na(+)(in) + ATP + H2O = K(+)(in) + Na(+)(out) + ADP + phosphate + H(+). Functionally, this is the catalytic component of the active enzyme, which catalyzes the hydrolysis of ATP coupled with the exchange of sodium and potassium ions across the plasma membrane. This action creates the electrochemical gradient of sodium and potassium ions, providing the energy for active transport of various nutrients. Could also be part of an osmosensory signaling pathway that senses body-fluid sodium levels and controls salt intake behavior as well as voluntary water intake to regulate sodium homeostasis. This Sus scrofa (Pig) protein is Sodium/potassium-transporting ATPase subunit alpha-1 (ATP1A1).